A 475-amino-acid polypeptide reads, in one-letter code: 23S rRNA (uracil(1939)-C(5))-methyltransferase RlmD (475 aa).

The segment covering 1-10 (MAMLGKRRPP) has biased composition (basic residues). The disordered stretch occupies residues 1 to 33 (MAMLGKRRPPRTANERVRRERGSATRRDDATAD). Residues 13–30 (ANERVRRERGSATRRDDA) are compositionally biased toward basic and acidic residues. Positions 26-85 (RRDDATADGLSIERLAHDGRGVARDPHGKTVFVDQALPGERVRVAVHRQRKRFDEAHVVE) constitute a TRAM domain. [4Fe-4S] cluster is bound by residues cysteine 98, cysteine 104, cysteine 107, and cysteine 183. S-adenosyl-L-methionine-binding residues include glutamine 294, phenylalanine 323, asparagine 328, glutamate 344, aspartate 371, and aspartate 388. The active-site Nucleophile is cysteine 414. A disordered region spans residues 455–475 (TRDTPRGRSTSVEREDHGQGP). Positions 457 to 475 (DTPRGRSTSVEREDHGQGP) are enriched in basic and acidic residues.

This sequence belongs to the class I-like SAM-binding methyltransferase superfamily. RNA M5U methyltransferase family. RlmD subfamily.

The enzyme catalyses uridine(1939) in 23S rRNA + S-adenosyl-L-methionine = 5-methyluridine(1939) in 23S rRNA + S-adenosyl-L-homocysteine + H(+). In terms of biological role, catalyzes the formation of 5-methyl-uridine at position 1939 (m5U1939) in 23S rRNA. The protein is 23S rRNA (uracil(1939)-C(5))-methyltransferase RlmD of Chromohalobacter salexigens (strain ATCC BAA-138 / DSM 3043 / CIP 106854 / NCIMB 13768 / 1H11).